The chain runs to 211 residues: Uridine kinase (211 aa).

Residue 12-19 (GGSGSGKT) participates in ATP binding.

It belongs to the uridine kinase family.

It localises to the cytoplasm. It carries out the reaction uridine + ATP = UMP + ADP + H(+). The catalysed reaction is cytidine + ATP = CMP + ADP + H(+). The protein operates within pyrimidine metabolism; CTP biosynthesis via salvage pathway; CTP from cytidine: step 1/3. It functions in the pathway pyrimidine metabolism; UMP biosynthesis via salvage pathway; UMP from uridine: step 1/1. This Bacillus subtilis (strain 168) protein is Uridine kinase (udk).